The primary structure comprises 704 residues: Elongation factor G 1 (704 aa).

Residues 8-291 (ERYRNIGISA…AVIDYLPSPA (284 aa)) form the tr-type G domain. GTP-binding positions include 17–24 (AHIDAGKT), 88–92 (DTPGH), and 142–145 (NKMD).

It belongs to the TRAFAC class translation factor GTPase superfamily. Classic translation factor GTPase family. EF-G/EF-2 subfamily.

Its subcellular location is the cytoplasm. Its function is as follows. Catalyzes the GTP-dependent ribosomal translocation step during translation elongation. During this step, the ribosome changes from the pre-translocational (PRE) to the post-translocational (POST) state as the newly formed A-site-bound peptidyl-tRNA and P-site-bound deacylated tRNA move to the P and E sites, respectively. Catalyzes the coordinated movement of the two tRNA molecules, the mRNA and conformational changes in the ribosome. The sequence is that of Elongation factor G 1 from Burkholderia thailandensis (strain ATCC 700388 / DSM 13276 / CCUG 48851 / CIP 106301 / E264).